The following is a 212-amino-acid chain: Ribosomal RNA large subunit methyltransferase E (212 aa).

Residues glycine 57, tryptophan 59, aspartate 77, aspartate 93, and aspartate 122 each contribute to the S-adenosyl-L-methionine site. The active-site Proton acceptor is lysine 162.

Belongs to the class I-like SAM-binding methyltransferase superfamily. RNA methyltransferase RlmE family.

The protein localises to the cytoplasm. The catalysed reaction is uridine(2552) in 23S rRNA + S-adenosyl-L-methionine = 2'-O-methyluridine(2552) in 23S rRNA + S-adenosyl-L-homocysteine + H(+). Its function is as follows. Specifically methylates the uridine in position 2552 of 23S rRNA at the 2'-O position of the ribose in the fully assembled 50S ribosomal subunit. This chain is Ribosomal RNA large subunit methyltransferase E, found in Coxiella burnetii (strain RSA 331 / Henzerling II).